A 208-amino-acid polypeptide reads, in one-letter code: Probable nicotinate-nucleotide adenylyltransferase (208 aa).

This sequence belongs to the NadD family.

It carries out the reaction nicotinate beta-D-ribonucleotide + ATP + H(+) = deamido-NAD(+) + diphosphate. The protein operates within cofactor biosynthesis; NAD(+) biosynthesis; deamido-NAD(+) from nicotinate D-ribonucleotide: step 1/1. Functionally, catalyzes the reversible adenylation of nicotinate mononucleotide (NaMN) to nicotinic acid adenine dinucleotide (NaAD). In Kineococcus radiotolerans (strain ATCC BAA-149 / DSM 14245 / SRS30216), this protein is Probable nicotinate-nucleotide adenylyltransferase.